The chain runs to 122 residues: Ribosome-binding factor A (122 aa).

This sequence belongs to the RbfA family. Monomer. Binds 30S ribosomal subunits, but not 50S ribosomal subunits or 70S ribosomes.

It localises to the cytoplasm. One of several proteins that assist in the late maturation steps of the functional core of the 30S ribosomal subunit. Associates with free 30S ribosomal subunits (but not with 30S subunits that are part of 70S ribosomes or polysomes). Required for efficient processing of 16S rRNA. May interact with the 5'-terminal helix region of 16S rRNA. The protein is Ribosome-binding factor A of Prosthecochloris aestuarii (strain DSM 271 / SK 413).